A 1396-amino-acid chain; its full sequence is DNA-directed RNA polymerase subunit beta' (1396 aa).

The Zn(2+) site is built by C72, C74, C87, and C90. Residues D463, D465, and D467 each contribute to the Mg(2+) site. Zn(2+) is bound by residues C814, C889, C896, and C899.

It belongs to the RNA polymerase beta' chain family. As to quaternary structure, the RNAP catalytic core consists of 2 alpha, 1 beta, 1 beta' and 1 omega subunit. When a sigma factor is associated with the core the holoenzyme is formed, which can initiate transcription. Mg(2+) is required as a cofactor. Requires Zn(2+) as cofactor.

The enzyme catalyses RNA(n) + a ribonucleoside 5'-triphosphate = RNA(n+1) + diphosphate. DNA-dependent RNA polymerase catalyzes the transcription of DNA into RNA using the four ribonucleoside triphosphates as substrates. This is DNA-directed RNA polymerase subunit beta' from Chlamydia trachomatis serovar L2b (strain UCH-1/proctitis).